A 124-amino-acid polypeptide reads, in one-letter code: Small ribosomal subunit protein uS12c (124 aa).

The protein belongs to the universal ribosomal protein uS12 family. In terms of assembly, part of the 30S ribosomal subunit.

The protein localises to the plastid. It localises to the chloroplast. Its function is as follows. With S4 and S5 plays an important role in translational accuracy. Located at the interface of the 30S and 50S subunits. This Ostreococcus tauri protein is Small ribosomal subunit protein uS12c (rps12).